Reading from the N-terminus, the 862-residue chain is Protein SEY1 (862 aa).

The Cytoplasmic segment spans residues 1–747 (MVSNGHFASA…KRSAIGGMTQ (747 aa)). In terms of domain architecture, GB1/RHD3-type G spans 49 to 306 (GFNYHLISVF…IPADGFAVYA (258 aa)). Position 59–66 (59–66 (GSQSTGKS)) interacts with GTP. A coiled-coil region spans residues 481-507 (SNYTQELALYQKDLEKISAQLRKDEMR). The helical transmembrane segment at 748-768 (IPVYFYILLLALGWNEIVAVL) threads the bilayer. The Lumenal portion of the chain corresponds to 769 to 771 (RNP). Residues 772–792 (LYFFMLFLCAVGAFVTYQLNL) traverse the membrane as a helical segment. Residues 793 to 862 (WGPMIKMAEA…DDDDEDEGSW (70 aa)) are Cytoplasmic-facing. A disordered region spans residues 819-862 (LEPSEAGPHAARYKNSTEEYEMSNVKAPQRTNSGDDDDEDEGSW). Over residues 852–862 (GDDDDEDEGSW) the composition is skewed to acidic residues.

Belongs to the TRAFAC class dynamin-like GTPase superfamily. GB1/RHD3 GTPase family. RHD3 subfamily.

Its subcellular location is the endoplasmic reticulum membrane. Cooperates with the reticulon proteins and tubule-shaping DP1 family proteins to generate and maintain the structure of the tubular endoplasmic reticulum network. Has GTPase activity, which is required for its function in ER organization. This is Protein SEY1 from Uncinocarpus reesii (strain UAMH 1704).